The primary structure comprises 188 residues: Protein K (188 aa).

The protein is Protein K (K) of Escherichia coli.